The chain runs to 400 residues: Enoyl-[acyl-carrier-protein] reductase [NADH] (400 aa).

NAD(+) contacts are provided by residues 48–53 (GASTGY), 74–75 (FE), 111–112 (DA), and 139–140 (LA). Tyr225 serves as a coordination point for substrate. Tyr235 acts as the Proton donor in catalysis. NAD(+) contacts are provided by residues Lys244 and 273–275 (VVT).

It belongs to the TER reductase family. As to quaternary structure, monomer.

The enzyme catalyses a 2,3-saturated acyl-[ACP] + NAD(+) = a (2E)-enoyl-[ACP] + NADH + H(+). The protein operates within lipid metabolism; fatty acid biosynthesis. In terms of biological role, involved in the final reduction of the elongation cycle of fatty acid synthesis (FAS II). Catalyzes the reduction of a carbon-carbon double bond in an enoyl moiety that is covalently linked to an acyl carrier protein (ACP). The protein is Enoyl-[acyl-carrier-protein] reductase [NADH] of Burkholderia vietnamiensis (strain G4 / LMG 22486) (Burkholderia cepacia (strain R1808)).